A 54-amino-acid polypeptide reads, in one-letter code: UPF0391 membrane protein Tbd_2238 (54 aa).

The next 2 helical transmembrane spans lie at 5-25 and 28-48; these read ALVF…GIAA and VGIA…TFVV.

This sequence belongs to the UPF0391 family.

It is found in the cell membrane. The sequence is that of UPF0391 membrane protein Tbd_2238 from Thiobacillus denitrificans (strain ATCC 25259 / T1).